We begin with the raw amino-acid sequence, 410 residues long: Cysteine desulfurase IscS (410 aa).

Pyridoxal 5'-phosphate is bound by residues 80–81, Asn160, Gln188, and 208–210; these read AT and SGH. At Lys211 the chain carries N6-(pyridoxal phosphate)lysine. Thr248 contacts pyridoxal 5'-phosphate. The Cysteine persulfide intermediate role is filled by Cys334. A [2Fe-2S] cluster-binding site is contributed by Cys334.

This sequence belongs to the class-V pyridoxal-phosphate-dependent aminotransferase family. NifS/IscS subfamily. Homodimer. Forms a heterotetramer with IscU, interacts with other sulfur acceptors. The cofactor is pyridoxal 5'-phosphate.

The protein resides in the cytoplasm. It catalyses the reaction (sulfur carrier)-H + L-cysteine = (sulfur carrier)-SH + L-alanine. The protein operates within cofactor biosynthesis; iron-sulfur cluster biosynthesis. Its function is as follows. Master enzyme that delivers sulfur to a number of partners involved in Fe-S cluster assembly, tRNA modification or cofactor biosynthesis. Catalyzes the removal of elemental sulfur atoms from cysteine to produce alanine. Functions as a sulfur delivery protein for Fe-S cluster synthesis onto IscU, an Fe-S scaffold assembly protein, as well as other S acceptor proteins. The polypeptide is Cysteine desulfurase IscS (Rickettsia bellii (strain OSU 85-389)).